Here is a 249-residue protein sequence, read N- to C-terminus: 5'-nucleotidase SurE (249 aa).

Residues aspartate 8, aspartate 9, serine 39, and asparagine 91 each coordinate a divalent metal cation.

The protein belongs to the SurE nucleotidase family. It depends on a divalent metal cation as a cofactor.

The protein localises to the cytoplasm. The catalysed reaction is a ribonucleoside 5'-phosphate + H2O = a ribonucleoside + phosphate. Functionally, nucleotidase that shows phosphatase activity on nucleoside 5'-monophosphates. This Pseudomonas putida (strain ATCC 700007 / DSM 6899 / JCM 31910 / BCRC 17059 / LMG 24140 / F1) protein is 5'-nucleotidase SurE.